A 472-amino-acid chain; its full sequence is Ribosomal protein uS12 methylthiotransferase RimO (472 aa).

The MTTase N-terminal domain occupies 33–143 (NRIGFVSLGC…VLKHVHKYVP (111 aa)). Positions 42, 78, 107, 175, 179, and 182 each coordinate [4Fe-4S] cluster. One can recognise a Radical SAM core domain in the interval 161-398 (LTPKHYAYLK…MELQAEISAE (238 aa)). Positions 401 to 467 (ARFVGRTLDI…EHDLWAEVVD (67 aa)) constitute a TRAM domain.

The protein belongs to the methylthiotransferase family. RimO subfamily. Requires [4Fe-4S] cluster as cofactor.

The protein localises to the cytoplasm. The enzyme catalyses L-aspartate(89)-[ribosomal protein uS12]-hydrogen + (sulfur carrier)-SH + AH2 + 2 S-adenosyl-L-methionine = 3-methylsulfanyl-L-aspartate(89)-[ribosomal protein uS12]-hydrogen + (sulfur carrier)-H + 5'-deoxyadenosine + L-methionine + A + S-adenosyl-L-homocysteine + 2 H(+). Functionally, catalyzes the methylthiolation of an aspartic acid residue of ribosomal protein uS12. The protein is Ribosomal protein uS12 methylthiotransferase RimO of Shewanella sp. (strain W3-18-1).